The sequence spans 549 residues: Polynucleotide 5'-hydroxyl-kinase nol-9 (549 aa).

190–197 (GHKGAGKS) lines the ATP pocket.

The protein belongs to the Clp1 family. NOL9/GRC3 subfamily.

It localises to the nucleus. It is found in the nucleolus. In terms of biological role, polynucleotide 5'-kinase involved in rRNA processing. The sequence is that of Polynucleotide 5'-hydroxyl-kinase nol-9 (nol-9) from Caenorhabditis elegans.